Reading from the N-terminus, the 81-residue chain is MSVKIRLQRFGKHKKPFYRVVAINSKNSRDGKFLEILGTYEPLLGNINLNTKNIEKWLFYGAVPTLTVKNLINKQNKNNKS.

Belongs to the bacterial ribosomal protein bS16 family.

The polypeptide is Small ribosomal subunit protein bS16 (Phytoplasma mali (strain AT)).